A 91-amino-acid chain; its full sequence is uncharacterized protein (91 aa).

Belongs to the UPF0440 family.

This is an uncharacterized protein from Methanothermobacter thermautotrophicus (strain ATCC 29096 / DSM 1053 / JCM 10044 / NBRC 100330 / Delta H) (Methanobacterium thermoautotrophicum).